The primary structure comprises 103 residues: Phorbol-12-myristate-13-acetate-induced protein 1 (103 aa).

Short sequence motifs (BH3) lie at residues 27–35 (LRKIGDKVY) and 78–86 (LRRIGDKVN). Residues 90–99 (KLLNLISKLF) are required for mitochondrial location.

It belongs to the PMAIP1 family. As to quaternary structure, interacts with MCL1. Interacts with BCL2A1. Interacts with BAX. Interacts with BCL2L10. In terms of tissue distribution, detected in thymocytes after irradiation with X-rays. Not detectable in untreated thymocytes (at protein level). Detected in embryonic neural precursor cells of the telencephalon Constitutively expressed at low levels in adult brain, testis, thymus, spleen, lung and kidney.

The protein resides in the mitochondrion. Functionally, promotes activation of caspases and apoptosis. Promotes mitochondrial membrane changes and efflux of apoptogenic proteins from the mitochondria. Contributes to p53/TP53-dependent apoptosis after radiation exposure. Promotes proteasomal degradation of MCL1. Competes with BIM/BCL2L11 for binding to MCL1 and can displace BIM/BCL2L11 from its binding site on MCL1. Competes with BAK1 for binding to MCL1 and can displace BAK1 from its binding site on MCL1. The chain is Phorbol-12-myristate-13-acetate-induced protein 1 (Pmaip1) from Mus musculus (Mouse).